Consider the following 40-residue polypeptide: Snaclec tokaracetin subunit beta (40 aa).

Cys-2 and Cys-13 form a disulfide bridge. In terms of domain architecture, C-type lectin spans 9 to 40; the sequence is YDEHCYRVFQQKMNWEDAEKFCTQQHKGXHLX.

This sequence belongs to the snaclec family. In terms of assembly, heterodimer of subunits alpha and beta; disulfide-linked. Expressed by the venom gland.

The protein resides in the secreted. Platelet antagonist that specifically and reversibly binds to a site on platelet glycoprotein Ibalpha (GP1BA) close to or identical with the site for vWF binding. It inhibits the binding of vWF to platelets and vWF-dependent shear-induced platelet aggregation. The sequence is that of Snaclec tokaracetin subunit beta from Protobothrops tokarensis (Tokara habu).